Reading from the N-terminus, the 341-residue chain is UDP-N-acetylenolpyruvoylglucosamine reductase (341 aa).

Residues 12–182 enclose the FAD-binding PCMH-type domain; it reads LSAYAKRLDI…ISVGLLLKKN (171 aa). Residue arginine 158 is part of the active site. Residue serine 228 is the Proton donor of the active site. Residue glutamate 324 is part of the active site.

Belongs to the MurB family. FAD is required as a cofactor.

It is found in the cytoplasm. It carries out the reaction UDP-N-acetyl-alpha-D-muramate + NADP(+) = UDP-N-acetyl-3-O-(1-carboxyvinyl)-alpha-D-glucosamine + NADPH + H(+). It functions in the pathway cell wall biogenesis; peptidoglycan biosynthesis. Cell wall formation. The protein is UDP-N-acetylenolpyruvoylglucosamine reductase of Photorhabdus laumondii subsp. laumondii (strain DSM 15139 / CIP 105565 / TT01) (Photorhabdus luminescens subsp. laumondii).